A 152-amino-acid polypeptide reads, in one-letter code: Transcriptional repressor NrdR (152 aa).

The segment at 3–34 (CPYCNASETKVIDSRLAAEGAQVRRRRSCNSC) is a zinc-finger region. In terms of domain architecture, ATP-cone spans 49 to 139 (PRIIKSSGKI…VYRDFQDIDA (91 aa)).

Belongs to the NrdR family. It depends on Zn(2+) as a cofactor.

Functionally, negatively regulates transcription of bacterial ribonucleotide reductase nrd genes and operons by binding to NrdR-boxes. This is Transcriptional repressor NrdR from Psychrobacter cryohalolentis (strain ATCC BAA-1226 / DSM 17306 / VKM B-2378 / K5).